Here is a 235-residue protein sequence, read N- to C-terminus: Purine nucleoside phosphorylase DeoD-type (235 aa).

His-4 provides a ligand contact to a purine D-ribonucleoside. Residues Gly-20, Arg-24, Arg-43, and 87-90 (RVGT) each bind phosphate. Residues Glu-162, 179 to 181 (EME), and 203 to 204 (SD) each bind a purine D-ribonucleoside. Residue Asp-204 is the Proton donor of the active site.

It belongs to the PNP/UDP phosphorylase family. In terms of assembly, homohexamer; trimer of homodimers.

It catalyses the reaction a purine D-ribonucleoside + phosphate = a purine nucleobase + alpha-D-ribose 1-phosphate. The catalysed reaction is a purine 2'-deoxy-D-ribonucleoside + phosphate = a purine nucleobase + 2-deoxy-alpha-D-ribose 1-phosphate. Its function is as follows. Catalyzes the reversible phosphorolytic breakdown of the N-glycosidic bond in the beta-(deoxy)ribonucleoside molecules, with the formation of the corresponding free purine bases and pentose-1-phosphate. In Bacillus cereus (strain ZK / E33L), this protein is Purine nucleoside phosphorylase DeoD-type.